Here is a 410-residue protein sequence, read N- to C-terminus: Probable protein S-acyltransferase 6 (410 aa).

2 consecutive transmembrane segments (helical) span residues 45 to 65 and 76 to 96; these read LGLT…FVAS and GVSI…LLML. The interval 108–129 is disordered; the sequence is NSHPPEPEVVDGNTGSGTSQTP. A DHHC domain is found at 147 to 197; that stretch reads KYCDTCMLYRPPRCSHCSICNNCVERFDHHCPWVGQCIAQRNYRFFFMFVF. C177 functions as the S-palmitoyl cysteine intermediate in the catalytic mechanism. The next 2 helical transmembrane spans lie at 191–211 and 235–255; these read FFFM…AFCC and SIAL…LTCF. S325 carries the post-translational modification Phosphoserine.

This sequence belongs to the DHHC palmitoyltransferase family.

It is found in the cell membrane. The catalysed reaction is L-cysteinyl-[protein] + hexadecanoyl-CoA = S-hexadecanoyl-L-cysteinyl-[protein] + CoA. Palmitoyl acyltransferase. The protein is Probable protein S-acyltransferase 6 (PAT06) of Arabidopsis thaliana (Mouse-ear cress).